Consider the following 467-residue polypeptide: Citrate synthase, mitochondrial (467 aa).

Active-site residues include H301 and H347.

This sequence belongs to the citrate synthase family.

The protein resides in the mitochondrion matrix. It catalyses the reaction oxaloacetate + acetyl-CoA + H2O = citrate + CoA + H(+). It participates in carbohydrate metabolism; tricarboxylic acid cycle; isocitrate from oxaloacetate: step 1/2. In Candida tropicalis (Yeast), this protein is Citrate synthase, mitochondrial (CIT).